The primary structure comprises 66 residues: Conotoxin PnMLCL-01 (66 aa).

Positions 1–19 are cleaved as a signal peptide; the sequence is MLCLPVFIILLLLASPAAS. A propeptide spanning residues 20–45 is cleaved from the precursor; that stretch reads NPLEKRIQSDLIRAALEDADTKNDPR. Position 63 is a cysteine amide (Cys-63).

It belongs to the conotoxin T superfamily. Contains 2 disulfide bonds that can be either 'C1-C3, C2-C4' or 'C1-C4, C2-C3', since these disulfide connectivities have been observed for conotoxins with cysteine framework V (for examples, see AC P0DQQ7 and AC P81755). Expressed by the venom duct.

Its subcellular location is the secreted. This is Conotoxin PnMLCL-01 from Conus pennaceus (Feathered cone).